A 93-amino-acid polypeptide reads, in one-letter code: Large ribosomal subunit protein uL23cz/uL23cy (93 aa).

It belongs to the universal ribosomal protein uL23 family. In terms of assembly, part of the 50S ribosomal subunit.

The protein resides in the plastid. The protein localises to the chloroplast. In terms of biological role, binds to 23S rRNA. This chain is Large ribosomal subunit protein uL23cz/uL23cy (rpl23-A), found in Helianthus annuus (Common sunflower).